The chain runs to 214 residues: Adenylate kinase (214 aa).

10-15 (GAGKGT) serves as a coordination point for ATP. The interval 30–59 (STGDMLRAAIKAGSELGQKAKILMDMGQLV) is NMP. AMP is bound by residues T31, R36, 57–59 (QLV), 85–88 (GFPR), and Q92. Positions 122–159 (GRRVHPASGRTYHIVYNPPKVEDKDDITGEDLILRADD) are LID. ATP is bound by residues R123 and 132-133 (TY). AMP is bound by residues R156 and R167. Position 200 (Q200) interacts with ATP.

The protein belongs to the adenylate kinase family. In terms of assembly, monomer.

The protein localises to the cytoplasm. The catalysed reaction is AMP + ATP = 2 ADP. The protein operates within purine metabolism; AMP biosynthesis via salvage pathway; AMP from ADP: step 1/1. Its function is as follows. Catalyzes the reversible transfer of the terminal phosphate group between ATP and AMP. Plays an important role in cellular energy homeostasis and in adenine nucleotide metabolism. In Histophilus somni (strain 129Pt) (Haemophilus somnus), this protein is Adenylate kinase.